The primary structure comprises 339 residues: Phytoene synthase (339 aa).

This sequence belongs to the phytoene/squalene synthase family. Requires ATP as cofactor. Mn(2+) is required as a cofactor. The cofactor is Mg(2+).

It functions in the pathway carotenoid biosynthesis; phytoene biosynthesis. In terms of biological role, involved in the biosynthesis of carotenoids. Catalyzes the condensation of two molecules of geranylgeranyl diphosphate (GGPP) to give prephytoene diphosphate (PPPP) and the subsequent rearrangement of the cyclopropylcarbinyl intermediate to yield phytoene. In Rhodobacter capsulatus (strain ATCC BAA-309 / NBRC 16581 / SB1003), this protein is Phytoene synthase (crtB).